Reading from the N-terminus, the 266-residue chain is RNA-binding protein 7 (266 aa).

Gly2 is subject to N-acetylglycine. The RRM domain maps to 10–87 (RTLFVGNLET…RPIKIQFRSG (78 aa)). ZCCHC8 binding stretches follow at residues 25 to 35 (LLFELFHQAGP) and 59 to 76 (HEVSVPYAMNLLNGIKLY). Polar residues predominate over residues 90 to 115 (HAPQDVSLSYPQHHVGNSSPTSTSPS). A disordered region spans residues 90–118 (HAPQDVSLSYPQHHVGNSSPTSTSPSRYE). Residues Ser136 and Ser137 each carry the phosphoserine modification. Arg152 is subject to Omega-N-methylarginine. The tract at residues 162-266 (SSPLDQSGFS…RDGKWRSSRH (105 aa)) is disordered. The segment covering 173 to 188 (SVQSHSHSFNQSSSSQ) has biased composition (low complexity). Position 204 is a phosphoserine (Ser204). Residues 209-266 (ADRHYSREQRYTDHGSDHHYRGKRDDFFYEDRNHDDWSHDYDNRRDSSRDGKWRSSRH) show a composition bias toward basic and acidic residues.

Component of the nuclear exosome targeting (NEXT) complex composed of MTREX, ZCCHC8, and RBM7 that directs a subset of non-coding short-lived RNAs for exosomal degradation. Interacts with ZCCHC8 and SF3B2/SAP145. Binds to MTREX through ZCCHC8. Interacts with YWHAE and YWHAZ; these interactions are stress-dependent and RBM7 phosphorylation dependent; release RNA from the NEXT complex and may affect RNA targeting to the nuclear RNA exosomome for degradation. Interacts with MEPCE and LARP7, the core subunits of 7SK snRNP; upon genotoxic stress this interaction is enhanced, triggering the release of inactive P-TEFb complex from the core and P-TEFb complex activation. In terms of processing, phosphorylated at Ser-136 by MAPK14/p38-alpha-activated MAPKAPK2/MK2; this phosphorylation is stress-dependent; this phosphorylation decreases its RNA-binding capacity therefore affecting RNA nuclear exosome-mediated degradation. This phosphorylation mediates YWHAE and YWHAZ interactions. Ubiquitous.

Its subcellular location is the nucleus. It is found in the nucleoplasm. Functionally, RNA-binding subunit of the trimeric nuclear exosome targeting (NEXT) complex, a complex that functions as an RNA exosome cofactor that directs a subset of non-coding short-lived RNAs for exosomal degradation. NEXT is involved in surveillance and turnover of aberrant transcripts and non-coding RNAs. Binds preferentially polyuridine sequences and associates with newly synthesized RNAs, including pre-mRNAs and short-lived exosome substrates such as promoter upstream transcripts (PROMPTs), enhancer RNAs (eRNAs), and 3'-extended products from small nuclear RNAs (snRNAs). Participates in several biological processes including DNA damage response (DDR) and stress response. During stress response, activation of the p38MAPK-MK2 pathway decreases RBM7-RNA-binding and subsequently the RNA exosome degradation activities, thereby modulating the turnover of non-coding transcriptome. Participates in DNA damage response (DDR), through its interaction with MEPCE and LARP7, the core subunits of 7SK snRNP complex, that release the positive transcription elongation factor b (P-TEFb) complex from the 7SK snRNP. In turn, activation of P-TEFb complex induces the transcription of P-TEFb-dependent DDR genes to promote cell viability. The polypeptide is RNA-binding protein 7 (Homo sapiens (Human)).